We begin with the raw amino-acid sequence, 254 residues long: Aspartate/glutamate leucyltransferase (254 aa).

It belongs to the R-transferase family. Bpt subfamily.

Its subcellular location is the cytoplasm. It carries out the reaction N-terminal L-glutamyl-[protein] + L-leucyl-tRNA(Leu) = N-terminal L-leucyl-L-glutamyl-[protein] + tRNA(Leu) + H(+). The catalysed reaction is N-terminal L-aspartyl-[protein] + L-leucyl-tRNA(Leu) = N-terminal L-leucyl-L-aspartyl-[protein] + tRNA(Leu) + H(+). Functionally, functions in the N-end rule pathway of protein degradation where it conjugates Leu from its aminoacyl-tRNA to the N-termini of proteins containing an N-terminal aspartate or glutamate. This Mesorhizobium japonicum (strain LMG 29417 / CECT 9101 / MAFF 303099) (Mesorhizobium loti (strain MAFF 303099)) protein is Aspartate/glutamate leucyltransferase.